A 518-amino-acid chain; its full sequence is 2-isopropylmalate synthase (518 aa).

The region spanning 5-268 (IIIFDTTLRD…DTRINTQEIH (264 aa)) is the Pyruvate carboxyltransferase domain. Residues D14, H202, H204, and N238 each coordinate Mn(2+). The interval 393 to 518 (TLDVITSQCI…DLKLHKIAGV (126 aa)) is regulatory domain.

The protein belongs to the alpha-IPM synthase/homocitrate synthase family. LeuA type 1 subfamily. As to quaternary structure, homodimer. Requires Mn(2+) as cofactor.

The protein resides in the cytoplasm. It catalyses the reaction 3-methyl-2-oxobutanoate + acetyl-CoA + H2O = (2S)-2-isopropylmalate + CoA + H(+). It functions in the pathway amino-acid biosynthesis; L-leucine biosynthesis; L-leucine from 3-methyl-2-oxobutanoate: step 1/4. Functionally, catalyzes the condensation of the acetyl group of acetyl-CoA with 3-methyl-2-oxobutanoate (2-ketoisovalerate) to form 3-carboxy-3-hydroxy-4-methylpentanoate (2-isopropylmalate). The protein is 2-isopropylmalate synthase of Pasteurella multocida (strain Pm70).